The chain runs to 156 residues: Arginine repressor (156 aa).

This sequence belongs to the ArgR family.

Its subcellular location is the cytoplasm. It functions in the pathway amino-acid biosynthesis; L-arginine biosynthesis [regulation]. Functionally, regulates arginine biosynthesis genes. The sequence is that of Arginine repressor from Salmonella agona (strain SL483).